Consider the following 341-residue polypeptide: L-threonine 3-dehydrogenase (341 aa).

Residue Cys38 participates in Zn(2+) binding. Residues Thr40 and His43 each act as charge relay system in the active site. Residues His63, Glu64, Cys93, Cys96, Cys99, and Cys107 each contribute to the Zn(2+) site. NAD(+) contacts are provided by residues Ile175, Asp195, Arg200, 262 to 264 (LGI), and 286 to 287 (IY).

It belongs to the zinc-containing alcohol dehydrogenase family. Homotetramer. The cofactor is Zn(2+).

The protein resides in the cytoplasm. The enzyme catalyses L-threonine + NAD(+) = (2S)-2-amino-3-oxobutanoate + NADH + H(+). The protein operates within amino-acid degradation; L-threonine degradation via oxydo-reductase pathway; glycine from L-threonine: step 1/2. Catalyzes the NAD(+)-dependent oxidation of L-threonine to 2-amino-3-ketobutyrate. This is L-threonine 3-dehydrogenase from Salmonella choleraesuis (strain SC-B67).